A 73-amino-acid chain; its full sequence is Heterin-2 (73 aa).

The first 22 residues, 1 to 22 (MQYKTFLVIFLAYLLVTEEALA), serve as a signal peptide directing secretion. Residues 47–73 (KRALKNIFDPYQKNLDLELERLLSQLQ) constitute a propeptide that is removed on maturation.

Belongs to the non-disulfide-bridged peptide (NDBP) superfamily. Medium-length antimicrobial peptide (group 3) family. In terms of tissue distribution, expressed by the venom gland.

The protein resides in the secreted. Its subcellular location is the target cell membrane. Amphipathic peptide with potent activities against Gram-positive bacteria (MIC=5.6-30.0 uM) and weaker activities against the tested Gram-negative bacteria (MIC=15 uM to &gt;45 uM). It has high hemolytic activity against human erythrocytes. May act by disrupting the integrity of the bacterial cell membrane. In Heterometrus spinifer (Asia giant forest scorpion), this protein is Heterin-2.